A 257-amino-acid chain; its full sequence is Glutamate racemase (257 aa).

Residues 12–13 and 44–45 contribute to the substrate site; these read DS and YG. Catalysis depends on Cys-75, which acts as the Proton donor/acceptor. Residue 76-77 participates in substrate binding; it reads NT. The Proton donor/acceptor role is filled by Cys-185. A substrate-binding site is contributed by 186–187; that stretch reads TH.

Belongs to the aspartate/glutamate racemases family.

It catalyses the reaction L-glutamate = D-glutamate. The protein operates within cell wall biogenesis; peptidoglycan biosynthesis. Provides the (R)-glutamate required for cell wall biosynthesis. This Clostridium botulinum (strain Langeland / NCTC 10281 / Type F) protein is Glutamate racemase.